The primary structure comprises 103 residues: Histone H4.2 (103 aa).

The span at 1 to 14 shows a compositional bias: gly residues; the sequence is MSGRGKGGKGLGKG. Residues 1–20 form a disordered region; that stretch reads MSGRGKGGKGLGKGGAKRHR. At Lys6 the chain carries N6-acetyl-N6-methyllysine; alternate. Residues Lys6, Lys9, and Lys13 each carry the N6-methyllysine; alternate modification. Position 13 is an N6-acetyl-N6-methyllysine; alternate (Lys13). The DNA-binding element occupies 17 to 21; that stretch reads KRHRK. Lys92 bears the N6-glutaryllysine mark.

Belongs to the histone H4 family. As to quaternary structure, the nucleosome is a histone octamer containing two molecules each of H2A, H2B, H3 and H4 assembled in one H3-H4 heterotetramer and two H2A-H2B heterodimers. The octamer wraps approximately 147 bp of DNA. Glutarylation at Lys-92 (H4K91glu) destabilizes nucleosomes by promoting dissociation of the H2A-H2B dimers from nucleosomes.

The protein resides in the nucleus. Its subcellular location is the chromosome. Core component of nucleosome. Nucleosomes wrap and compact DNA into chromatin, limiting DNA accessibility to the cellular machineries which require DNA as a template. Histones thereby play a central role in transcription regulation, DNA repair, DNA replication and chromosomal stability. DNA accessibility is regulated via a complex set of post-translational modifications of histones, also called histone code, and nucleosome remodeling. In Emericella nidulans (strain FGSC A4 / ATCC 38163 / CBS 112.46 / NRRL 194 / M139) (Aspergillus nidulans), this protein is Histone H4.2 (hhfB).